Consider the following 208-residue polypeptide: Large ribosomal subunit protein uL3 (208 aa).

The segment at 122-148 (KRHGQSRGPMAHGSRYHRRPGSMGPVA) is disordered.

This sequence belongs to the universal ribosomal protein uL3 family. Part of the 50S ribosomal subunit. Forms a cluster with proteins L14 and L19.

One of the primary rRNA binding proteins, it binds directly near the 3'-end of the 23S rRNA, where it nucleates assembly of the 50S subunit. This chain is Large ribosomal subunit protein uL3, found in Streptococcus pyogenes serotype M1.